Consider the following 294-residue polypeptide: NAD kinase (294 aa).

Asp74 functions as the Proton acceptor in the catalytic mechanism. Residues 74-75 (DG), Lys79, 149-150 (NE), Asp179, 190-195 (TGYSLS), and Ala214 each bind NAD(+).

This sequence belongs to the NAD kinase family. A divalent metal cation is required as a cofactor.

Its subcellular location is the cytoplasm. It carries out the reaction NAD(+) + ATP = ADP + NADP(+) + H(+). Functionally, involved in the regulation of the intracellular balance of NAD and NADP, and is a key enzyme in the biosynthesis of NADP. Catalyzes specifically the phosphorylation on 2'-hydroxyl of the adenosine moiety of NAD to yield NADP. The polypeptide is NAD kinase (Christiangramia forsetii (strain DSM 17595 / CGMCC 1.15422 / KT0803) (Gramella forsetii)).